The chain runs to 90 residues: Small ribosomal subunit protein uS15 (90 aa).

The protein belongs to the universal ribosomal protein uS15 family. Part of the 30S ribosomal subunit. Forms a bridge to the 50S subunit in the 70S ribosome, contacting the 23S rRNA.

In terms of biological role, one of the primary rRNA binding proteins, it binds directly to 16S rRNA where it helps nucleate assembly of the platform of the 30S subunit by binding and bridging several RNA helices of the 16S rRNA. Its function is as follows. Forms an intersubunit bridge (bridge B4) with the 23S rRNA of the 50S subunit in the ribosome. The protein is Small ribosomal subunit protein uS15 of Campylobacter jejuni subsp. jejuni serotype O:6 (strain 81116 / NCTC 11828).